Consider the following 568-residue polypeptide: Delta 8-(E)-sphingolipid desaturase (568 aa).

The 76-residue stretch at 2–77 folds into the Cytochrome b5 heme-binding domain; sequence DNIISRGEIE…FRKWRIGRID (76 aa). Heme-binding residues include His37 and His60. Helical transmembrane passes span 241–261 and 272–292; these read FWSA…AHDA and LDNI…LGWW. The Histidine box-1 signature appears at 259 to 263; that stretch reads HDAGH. Positions 296–300 match the Histidine box-2 motif; sequence HNVHH. A run of 3 helical transmembrane segments spans residues 352 to 377, 389 to 409, and 421 to 441; these read YLYY…LLGL, YFEL…LVGC, and IMVS…SHFA. A Histidine box-3 motif is present at residues 480–484; that stretch reads QVVHH. Residues 549–560 are compositionally biased toward basic and acidic residues; it reads ATGEREADEKTY. The segment at 549–568 is disordered; sequence ATGEREADEKTYRTKSIKNA.

Belongs to the fatty acid desaturase type 1 family.

Its subcellular location is the membrane. The enzyme catalyses an N-acylsphing-4-enine + 2 Fe(II)-[cytochrome b5] + O2 + 2 H(+) = a (4E,8E)-4-sphinga-4,8-dienine ceramide + 2 Fe(III)-[cytochrome b5] + 2 H2O. Its pathway is lipid metabolism; sphingolipid metabolism. Functionally, delta(8)-fatty-acid desaturase which introduces a double bond at the 8-position in the long-chain base (LCB) of ceramides. Required for the formation of the di-unsaturated sphingoid base (E,E)-sphinga-4,8-dienine during glucosylceramide (GluCer) biosynthesis. This Lachancea kluyveri (strain ATCC 58438 / CBS 3082 / BCRC 21498 / NBRC 1685 / JCM 7257 / NCYC 543 / NRRL Y-12651) (Yeast) protein is Delta 8-(E)-sphingolipid desaturase.